Reading from the N-terminus, the 234-residue chain is DNA repair protein RecO (234 aa).

Belongs to the RecO family.

In terms of biological role, involved in DNA repair and RecF pathway recombination. This is DNA repair protein RecO from Idiomarina loihiensis (strain ATCC BAA-735 / DSM 15497 / L2-TR).